The following is a 452-amino-acid chain: General transcription and DNA repair factor IIH subunit TFB2 (452 aa).

This sequence belongs to the TFB2 family. Component of the 7-subunit TFIIH core complex composed of XPB, XPD, TFB1/GTF2H1, GTF2H2/P44, TFB4/GTF2H3, TFB2/GTF2H4 and TFB5/GTF2H5, which is active in NER. The core complex associates with the 3-subunit CDK-activating kinase (CAK) module composed of CYCH1/cyclin H1, CDKD and MAT1/At4g30820 to form the 10-subunit holoenzyme (holo-TFIIH) active in transcription.

It is found in the nucleus. In terms of biological role, component of the general transcription and DNA repair factor IIH (TFIIH) core complex, which is involved in general and transcription-coupled nucleotide excision repair (NER) of damaged DNA and, when complexed to CAK, in RNA transcription by RNA polymerase II. In NER, TFIIH acts by opening DNA around the lesion to allow the excision of the damaged oligonucleotide and its replacement by a new DNA fragment. In transcription, TFIIH has an essential role in transcription initiation. When the pre-initiation complex (PIC) has been established, TFIIH is required for promoter opening and promoter escape. Phosphorylation of the C-terminal tail (CTD) of the largest subunit of RNA polymerase II by the kinase module CAK controls the initiation of transcription. The protein is General transcription and DNA repair factor IIH subunit TFB2 of Arabidopsis thaliana (Mouse-ear cress).